We begin with the raw amino-acid sequence, 673 residues long: Ribonucleoprotein PTB-binding 2 (673 aa).

The segment covering 1–17 (MAARGGGAGGAGSGSGP) has biased composition (gly residues). The segment at 1–34 (MAARGGGAGGAGSGSGPSAGTAGEAAEPALRPGE) is disordered. Positions 18–29 (SAGTAGEAAEPA) are enriched in low complexity. RRM domains are found at residues 58-129 (RKIL…LQPT), 131-209 (ALLC…WMDV), and 220-298 (KCLC…FCAP). Residues 481-549 (QLPAGQAGPG…KGTEVASKNQ (69 aa)) are disordered. Over residues 499-512 (SASVSISEASFSGS) the composition is skewed to low complexity. Residues 529-549 (TGNQKTPQSQPKGTEVASKNQ) show a composition bias toward polar residues.

As to quaternary structure, interacts with PTBP1 and RAVER1. As to expression, expressed throughout embryogenesis. Detected at low levels in adult lung, brain and kidney, but not in the other tissues tested.

Its subcellular location is the nucleus. It is found in the cytoplasm. Its function is as follows. May bind single-stranded nucleic acids. The protein is Ribonucleoprotein PTB-binding 2 (Raver2) of Mus musculus (Mouse).